The following is a 724-amino-acid chain: MDHHKQLTLQTTLESCNNLYNLLFNSIGSIKPSQQQQQQQQNQKNTNSVTSNTNIINDQEIFKLNKFHLYGENNIDELYNSIELQLQTIKFTCQQYRQWDSTERDSIKFFNTQKLYNQSQQRGNLVSKTLFDCSLLGKIYLNQQKEQQQQQKQKNKQQQQQPQPLVEDLSKNISKTVEVKRKLGLLAGKLQEMTNELNNKYSTFSVLDDLLGLLKSNTEIDYNSDSYVSCNISSSTFLLDIDIYHNGEIKEVKLVHILTTTGEVEPAEQQFNDELTNSLKTDMKEFIKKVQRICDLDLLFRKYKHFDLQKAFSILQSDFLNISINSNIKYIDNKEIEMNKGFGEIKLDCCGVLIKYFQSYIEKISKMNEPYSIMIEMESSAVTNNGSLIDQSEYSRLSLKTLLQKQQHTQPSAQTDYSEQQQQQSISTQLTSIEFNEKDCLDCEPLSSMLESDSIFSPVRLVCKLNKPILITNQQLSKILNLSKIHRSSQQPSQQQPSQQQQQQQQQQQQKKLNSVDESMNENGDSNIIENINELIKKYSIQNLLISSSSSSSSSNDSNISVNVDNSFDCEVYGMKQRYYYTGEFELGIEISRIPIYHPSQVYPTIQLLRQQIVFNILFKSCFQNLNISKSDDHHNIIDNNNDVKIFEITSNPPNSINIIFLHPIDNSFNSIDIFIKNNGDLEAFYYDNTTNIQPNIQKSTLFTKMLIKSLSISVSLACFFKNK.

Disordered stretches follow at residues 33 to 52, 147 to 167, and 486 to 524; these read SQQQ…VTSN, QQQQ…PLVE, and HRSS…NENG. The stretch at 140 to 200 forms a coiled coil; the sequence is YLNQQKEQQQ…QEMTNELNNK (61 aa). Composition is skewed to low complexity over residues 147–164 and 488–510; these read QQQQ…QPQP and SSQQ…QQQQ. The segment covering 511 to 524 has biased composition (polar residues); it reads KKLNSVDESMNENG.

This sequence belongs to the Mediator complex subunit 1 family. As to quaternary structure, component of the Mediator complex.

It is found in the nucleus. In terms of biological role, component of the Mediator complex, a coactivator involved in the regulated transcription of nearly all RNA polymerase II-dependent genes. Mediator functions as a bridge to convey information from gene-specific regulatory proteins to the basal RNA polymerase II transcription machinery. Mediator is recruited to promoters by direct interactions with regulatory proteins and serves as a scaffold for the assembly of a functional preinitiation complex with RNA polymerase II and the general transcription factors. The sequence is that of Putative mediator of RNA polymerase II transcription subunit 1 (med1) from Dictyostelium discoideum (Social amoeba).